Reading from the N-terminus, the 937-residue chain is Outer membrane usher protein CS3-2 (937 aa).

It belongs to the fimbrial export usher family. In terms of processing, a 97 kDa form of the protein is thought to be due to post-translational processing of isoform 104 kDa.

It is found in the cell outer membrane. In terms of biological role, these proteins are essential for the biogenesis of mature CS3 pili, but not for synthesis of the CS3 pilin subunit. This is Outer membrane usher protein CS3-2 from Escherichia coli.